The sequence spans 100 residues: MKISEEEVRHVAKLSKLSFSESETTTFATTLSKIVDMVELLNEVDTEGVAITTTMADKKNVMRQDVAEEGTDRALLFKNVPEKENHFIKVPAILDDGGDA.

This sequence belongs to the GatC family. In terms of assembly, heterotrimer of A, B and C subunits.

It catalyses the reaction L-glutamyl-tRNA(Gln) + L-glutamine + ATP + H2O = L-glutaminyl-tRNA(Gln) + L-glutamate + ADP + phosphate + H(+). The catalysed reaction is L-aspartyl-tRNA(Asn) + L-glutamine + ATP + H2O = L-asparaginyl-tRNA(Asn) + L-glutamate + ADP + phosphate + 2 H(+). Allows the formation of correctly charged Asn-tRNA(Asn) or Gln-tRNA(Gln) through the transamidation of misacylated Asp-tRNA(Asn) or Glu-tRNA(Gln) in organisms which lack either or both of asparaginyl-tRNA or glutaminyl-tRNA synthetases. The reaction takes place in the presence of glutamine and ATP through an activated phospho-Asp-tRNA(Asn) or phospho-Glu-tRNA(Gln). The protein is Glutamyl-tRNA(Gln) amidotransferase subunit C of Streptococcus pyogenes serotype M1.